A 309-amino-acid polypeptide reads, in one-letter code: HPr kinase/phosphorylase (309 aa).

Active-site residues include H138 and K159. Residue 153 to 160 coordinates ATP; sequence GQSGVGKS. S160 contributes to the Mg(2+) binding site. Residue D177 is the Proton acceptor; for phosphorylation activity. Proton donor; for dephosphorylation activity of the active site. The segment at 201 to 210 is important for the catalytic mechanism of both phosphorylation and dephosphorylation; the sequence is LEIRGLGIIN. E202 is a binding site for Mg(2+). R243 is an active-site residue. The important for the catalytic mechanism of dephosphorylation stretch occupies residues 264–269; that stretch reads PVRPGR.

Belongs to the HPrK/P family. As to quaternary structure, homohexamer. Mg(2+) serves as cofactor.

It catalyses the reaction [HPr protein]-L-serine + ATP = [HPr protein]-O-phospho-L-serine + ADP + H(+). The catalysed reaction is [HPr protein]-O-phospho-L-serine + phosphate + H(+) = [HPr protein]-L-serine + diphosphate. In terms of biological role, catalyzes the ATP- as well as the pyrophosphate-dependent phosphorylation of a specific serine residue in HPr, a phosphocarrier protein of the phosphoenolpyruvate-dependent sugar phosphotransferase system (PTS). HprK/P also catalyzes the pyrophosphate-producing, inorganic phosphate-dependent dephosphorylation (phosphorolysis) of seryl-phosphorylated HPr (P-Ser-HPr). The two antagonistic activities of HprK/P are regulated by several intracellular metabolites, which change their concentration in response to the absence or presence of rapidly metabolisable carbon sources (glucose, fructose, etc.) in the growth medium. Also phosphorylates/dephosphorylates the HPr-like catabolite repression protein crh on a specific serine residue. Therefore, by controlling the phosphorylation state of HPr and crh, HPrK/P is a sensor enzyme that plays a major role in the regulation of carbon metabolism and sugar transport: it mediates carbon catabolite repression (CCR), and regulates PTS-catalyzed carbohydrate uptake and inducer exclusion. This Bacillus cereus (strain G9842) protein is HPr kinase/phosphorylase.